A 114-amino-acid chain; its full sequence is Protein vCCL3 (114 aa).

Positions 1-26 (MWSMCWVLRAHLGLLFWVAVIELCAA) are cleaved as a signal peptide.

In terms of biological role, acts as a highly selective agonist for human lymphoactin receptor XCR1. The chain is Protein vCCL3 (K4.1) from Human herpesvirus 8 type P (isolate GK18) (HHV-8).